Consider the following 443-residue polypeptide: Diels-Alderase poxQ (443 aa).

A signal peptide spans 1–23; the sequence is MARIPLEFLSITLPVLLLAYCLA. Residues N78, N97, and N145 are each glycosylated (N-linked (GlcNAc...) asparagine).

This sequence belongs to the Diels-Alderase family.

It participates in secondary metabolite biosynthesis. Its function is as follows. Diels-Alderase; part of the gene cluster that mediates the biosynthesis of oxaleimides, cytotoxic compounds containing an unusual disubstituted succinimide moiety. The first step of the pathway is provided by the HR-PKS poxF that serves in a new mode of collaborative biosynthesis with the PKS-NRPS poxE, by providing the olefin containing amino acid substrate via the synthesis of an ACP-bound dec-4-enoate. The cytochrome P450 monooxygenase poxM-catalyzed oxidation at the alpha-position creates the enzyme-bound 2-hydroxydec-4-enoyl-ACP thioester, which may be prone to spontaneous hydrolysis to yield 2-hydroxydec-4-enoic acid due to increased electrophilicity of the carbonyl. 2-hydroxydec-4-enoic acid can then be further oxidized by poxM to yield the alpha-ketoacid 2-oxodec-4-enoicacid, which is reductively aminated by the aminotransferase poxL to yield (S,E)-2-aminodec-4-enoic acid. The Hybrid PKS-NRPS synthetase poxE then performs condensation between the octaketide product of its PKS modules and the amino group of (S,E)-2-aminodec-4-enoic acid which is activated and incorporated by the adenylation domain. The resulting aminoacyl product can be cyclized by the Diels-Alderase PoxQ and reductively released by the reductive (R) domain of poxE to yield an aldehyde intermediate. The released aldehyde is then substrate for a Knoevenagel condensation by the hydrolyase poxO followed by an oxidation at the 5-position of the pyrrolidone ring. The presence of the olefin from the amino acid building block allows for migration of the substituted allyl group to occur. This allylic transposition reaction takes place in a conjugate addition, semipinacol-like fashion to yield a succinimide intermediate. Iterative two-electron oxidations of the C7 methyl of the succinimide intermediate to the carboxylic acid can be catalyzed by one of two remaining cytochrome P450 monooxygenasess poxC or poxD to yield oxaleimide A. Subsequent oxidation yields the maleimide scaffold oxaleimide I. Both oxaleimide A and oxaleimide I can undergo oxidative modifications in the decalin ring to yield the series of products oxaleimides B to H. In Penicillium oxalicum (strain 114-2 / CGMCC 5302) (Penicillium decumbens), this protein is Diels-Alderase poxQ.